We begin with the raw amino-acid sequence, 213 residues long: Protein-L-isoaspartate O-methyltransferase 1 (213 aa).

Ser-64 is a catalytic residue.

It belongs to the methyltransferase superfamily. L-isoaspartyl/D-aspartyl protein methyltransferase family.

The protein resides in the cytoplasm. The catalysed reaction is [protein]-L-isoaspartate + S-adenosyl-L-methionine = [protein]-L-isoaspartate alpha-methyl ester + S-adenosyl-L-homocysteine. In terms of biological role, catalyzes the methyl esterification of L-isoaspartyl residues in peptides and proteins that result from spontaneous decomposition of normal L-aspartyl and L-asparaginyl residues. It plays a role in the repair and/or degradation of damaged proteins. The sequence is that of Protein-L-isoaspartate O-methyltransferase 1 from Nitrosococcus oceani (strain ATCC 19707 / BCRC 17464 / JCM 30415 / NCIMB 11848 / C-107).